Reading from the N-terminus, the 51-residue chain is Small integral membrane protein 38 (51 aa).

A helical membrane pass occupies residues 13–33 (PLLALLVVILLARLILWSCLG).

It is found in the membrane. The chain is Small integral membrane protein 38 from Homo sapiens (Human).